The chain runs to 353 residues: UPF0283 membrane protein YcjF (353 aa).

A compositionally biased stretch (basic and acidic residues) spans 1–19 (MSEPLKPRIDFAEPLKEEP). The segment at 1–35 (MSEPLKPRIDFAEPLKEEPTSAFKAQQTFSEAESR) is disordered. The next 3 membrane-spanning stretches (helical) occupy residues 70–90 (MVMG…VQWT), 100–120 (VALG…GSVV), and 213–233 (ESTL…FIAW).

This sequence belongs to the UPF0283 family.

The protein resides in the cell inner membrane. The polypeptide is UPF0283 membrane protein YcjF (Salmonella newport (strain SL254)).